Here is a 124-residue protein sequence, read N- to C-terminus: Large ribosomal subunit protein bL12 (124 aa).

Belongs to the bacterial ribosomal protein bL12 family. Homodimer. Part of the ribosomal stalk of the 50S ribosomal subunit. Forms a multimeric L10(L12)X complex, where L10 forms an elongated spine to which 2 to 4 L12 dimers bind in a sequential fashion. Binds GTP-bound translation factors.

Forms part of the ribosomal stalk which helps the ribosome interact with GTP-bound translation factors. Is thus essential for accurate translation. The sequence is that of Large ribosomal subunit protein bL12 from Hamiltonella defensa subsp. Acyrthosiphon pisum (strain 5AT).